The following is a 101-amino-acid chain: Putative defensin-like protein 253 (101 aa).

Residues 1–23 (MRFASLFVVYCTFMFLDISHVKC) form the signal peptide. 4 disulfide bridges follow: Cys31–Cys84, Cys41–Cys66, Cys49–Cys76, and Cys64–Cys78.

It belongs to the DEFL family.

Its subcellular location is the secreted. In Arabidopsis thaliana (Mouse-ear cress), this protein is Putative defensin-like protein 253 (SCRL15).